The primary structure comprises 105 residues: Putative RNA-binding protein RbpF (105 aa).

One can recognise an RRM domain in the interval 2-79 (SIYVGNLSYE…RDLKVNKAKP (78 aa)). The segment covering 75-84 (NKAKPKEDRG) has biased composition (basic and acidic residues). A disordered region spans residues 75–105 (NKAKPKEDRGSFGGGNRGGYGGGGGGGRSRY). Gly residues predominate over residues 85 to 105 (SFGGGNRGGYGGGGGGGRSRY).

In Nostoc sp. (strain PCC 7120 / SAG 25.82 / UTEX 2576), this protein is Putative RNA-binding protein RbpF (rbpF).